Reading from the N-terminus, the 625-residue chain is Alpha-1,3-galactosidase A (625 aa).

The N-terminal stretch at 1–32 (MAHGCSGGAMSRFVFLGVALALLGGATSPAAA) is a signal peptide. PbH1 repeat units follow at residues 342–364 (KGKV…NIHG), 460–482 (TPSV…LVTT), 483–505 (RKPV…YVSA), 516–537 (VADL…IFVE), and 573–611 (VGGF…RIAR).

The protein belongs to the glycosyl hydrolase 110 family. A subfamily.

The enzyme catalyses Hydrolysis of terminal, non-reducing branched (1-&gt;3)-alpha-D-galactosidic residues, producing free D-galactose.. It catalyses the reaction Hydrolysis of terminal, non-reducing alpha-D-galactose residues in alpha-D-galactosides, including galactose oligosaccharides, galactomannans and galactolipids.. Functionally, alpha-galactosidase that specifically removes branched alpha-1,3-linked galactose residues present in blood group B antigens. Has no activity toward linear alpha-1,3-linked galactose residues. The sequence is that of Alpha-1,3-galactosidase A (glaA) from Streptomyces avermitilis (strain ATCC 31267 / DSM 46492 / JCM 5070 / NBRC 14893 / NCIMB 12804 / NRRL 8165 / MA-4680).